The sequence spans 442 residues: Thymidine phosphorylase (442 aa).

This sequence belongs to the thymidine/pyrimidine-nucleoside phosphorylase family. In terms of assembly, homodimer.

The catalysed reaction is thymidine + phosphate = 2-deoxy-alpha-D-ribose 1-phosphate + thymine. It participates in pyrimidine metabolism; dTMP biosynthesis via salvage pathway; dTMP from thymine: step 1/2. Its function is as follows. The enzymes which catalyze the reversible phosphorolysis of pyrimidine nucleosides are involved in the degradation of these compounds and in their utilization as carbon and energy sources, or in the rescue of pyrimidine bases for nucleotide synthesis. The polypeptide is Thymidine phosphorylase (Pectobacterium atrosepticum (strain SCRI 1043 / ATCC BAA-672) (Erwinia carotovora subsp. atroseptica)).